The sequence spans 1778 residues: Nuclear receptor corepressor 1 (1778 aa).

The SANT domain occupies Asp-125–Asp-176. The region spanning Trp-356–Asn-398 is the Myb-like domain. Acidic residues predominate over residues Val-409–Gly-421. Disordered stretches follow at residues Val-409–Thr-671, Ser-992–Ser-1024, Lys-1195–Gln-1218, Gln-1276–Val-1339, Pro-1414–Ser-1434, and Ala-1646–Pro-1718. 2 stretches are compositionally biased toward low complexity: residues Ser-431–Arg-442 and Thr-450–Ala-469. Acidic residues predominate over residues Asp-478 to Glu-493. Positions Asp-494 to Ser-513 are enriched in basic and acidic residues. Composition is skewed to acidic residues over residues Met-517 to Glu-545 and Glu-599 to Glu-616. 2 stretches are compositionally biased toward low complexity: residues Ser-626 to Gly-639 and Leu-649 to Thr-671. Positions Gln-1276–His-1285 are enriched in low complexity. Positions Ser-1687–Val-1696 are enriched in low complexity.

The protein belongs to the N-CoR nuclear receptor corepressors family. Interacts with gex-3. Interacts (via C-terminus) with nhr-60. As to expression, in larvae, expressed in pharyngeal neurons, ventral and dorsal nerve cords, tail neurons, egg-laying neurons and egg-laying muscles. Detected in the neurons of the pharyngeal nerve ring, head neurons, tail neurons and egg-laying muscles in adults. Detected in male-specific tail ganglia and rays in males.

Its subcellular location is the nucleus. In terms of biological role, mediates transcriptional repression by certain nuclear receptors. Plays a role in development and neuronal function. May play a role in muscle-specific oxidative mitochondrial metabolism. The protein is Nuclear receptor corepressor 1 of Caenorhabditis elegans.